The primary structure comprises 299 residues: MEVTPIPGAPLGAVVHGARVTGDMDKTHLEEIWSALDTYLVLVLRGHETPSYEEFLAFGRRFGHIPKTGLTSGAHPEHNEILIVSNLVEDGRKIGVGDAEWMGWHTDYSFRPRVSQVGFLEAVEVPYSGGGETLFTDMYALYESLSPEERRRLHSFRVRHALRTGYEETIEEELQREVTLGEGADRIQPEDGTSTVHPLIARNPRTGRRSVYISTLNTERIVDLAPDDSRELLDGLLAHAGKPQYTYAHTWQPGDLVVWDQLGTVHAKQAFDPAERRVMRQVVSIFDDPAGPWRAEAAA.

Residues H105 and D107 each coordinate Fe cation. 2-oxoglutarate-binding residues include T133 and W251. Fe cation is bound at residue H266. R277 is a 2-oxoglutarate binding site.

It belongs to the TfdA dioxygenase family. Fe(2+) serves as cofactor.

It carries out the reaction pentalenolactone D + 2 2-oxoglutarate + 2 O2 = pentalenolactone F + 2 succinate + 2 CO2 + H2O. Its pathway is antibiotic biosynthesis; pentalenolactone biosynthesis. Activated by ascorbate. Its function is as follows. Catalyzes the Fe(2+) and alpha-ketoglutarate-dependent oxidation of pentalenolactone D to pentalenolactone F in the biosynthesis of pentalenolactone antibiotic. Also able to catalyze the oxidation of pentalenolactone D to pentalenolactone E. This Streptomyces arenae protein is Pentalenolactone F synthase (pntD).